We begin with the raw amino-acid sequence, 193 residues long: Acyl carrier protein phosphodiesterase (193 aa).

Belongs to the AcpH family.

The catalysed reaction is holo-[ACP] + H2O = apo-[ACP] + (R)-4'-phosphopantetheine + H(+). Its function is as follows. Converts holo-ACP to apo-ACP by hydrolytic cleavage of the phosphopantetheine prosthetic group from ACP. This Salmonella choleraesuis (strain SC-B67) protein is Acyl carrier protein phosphodiesterase.